The sequence spans 139 residues: Cystatin-11 (139 aa).

Positions 1-28 (MAAGSWKATRLLLAILVALVAFSYQVKR) are cleaved as a signal peptide. Cystine bridges form between Cys94/Cys102 and Cys115/Cys135. N-linked (GlcNAc...) asparagine glycosylation occurs at Asn134.

This sequence belongs to the cystatin family. In terms of tissue distribution, expressed in epididymis, where it localizes to the proximal caput and also part of the midcaput. Not detected in other tissues tested.

It is found in the secreted. Its function is as follows. Has antibacterial activity against the Gram-negative bacteria E.coli. May play a role in sperm maturation and fertilization. The sequence is that of Cystatin-11 from Mus musculus (Mouse).